Consider the following 565-residue polypeptide: MSEATTATTTGKPSRSTKNPDAPRPYKCPLCTKAFYRLEHQTRHIRTHTGEKPHVCTFPGCAKRFSRSDELTRHARIHTNANSRRNAAAAAAANNSARSSNSPAGNLEPSTNNAGVHMTNASMNPNVNPSYPVFIPQVGMSVAPPVATAAVSMSYPHHYSASVQQQQATFVSNGQPHNLPAQAQPATIYGIPDALHTTQNGTTIHVTGTPPGAVSQRSEPDSRLSSMNEMQLLASAAANQLDAAPRITPTKSSGVNLMPLSNAPSPPKQMNVVGSLPSSSNTSPNHLASVPNRGLTSNSSTGSFTKYTNGSSNSLYSNSSMQTPYLPSKSNSSTSLHSMYGVGTTAYAPQSLRYAHYNYLPYSRPSVSNGFDDDSSSSDFAHFRYQRRSRPVSPCSTAPSSPTFSTRSFSPTPDVTPLVTPAHSPRLRPMDDPSCVQLPSIRSLSLRPSQVPLIPPLKCDPNAFSASTPASGAVSRTPSSVSLSSLSNVNSSMPHKPASQSNVGPVRISSNRRSRKFSSSSRVSVSNLLAGSPPSPSSSTKSASSSYSTTTPAFSIGPLTPMTKP.

Over residues 1-19 (MSEATTATTTGKPSRSTKN) the composition is skewed to polar residues. Residues 1-25 (MSEATTATTTGKPSRSTKNPDAPRP) are disordered. 2 C2H2-type zinc fingers span residues 26–48 (YKCPLCTKAFYRLEHQTRHIRTH) and 54–78 (HVCTFPGCAKRFSRSDELTRHARIH). 4 disordered regions span residues 79-119 (TNAN…VHMT), 261-303 (SNAP…STGS), 390-434 (RPVS…DDPS), and 466-565 (ASTP…MTKP). Positions 80 to 102 (NANSRRNAAAAAAANNSARSSNS) are enriched in low complexity. Polar residues-rich tracts occupy residues 108–119 (EPSTNNAGVHMT), 276–286 (LPSSSNTSPNH), and 294–303 (GLTSNSSTGS). The span at 391–413 (PVSPCSTAPSSPTFSTRSFSPTP) shows a compositional bias: low complexity. The span at 466-478 (ASTPASGAVSRTP) shows a compositional bias: polar residues. Composition is skewed to low complexity over residues 479 to 492 (SSVSLSSLSNVNSS), 517 to 526 (FSSSSRVSVS), and 537 to 555 (SSSTKSASSSYSTTTPAFS).

Belongs to the creA/MIG C2H2-type zinc-finger protein family.

It is found in the nucleus. Functionally, involved in carbon catabolite repression. Represses the transcription of various genes including the inv1 gene. In Schizosaccharomyces pombe (strain 972 / ATCC 24843) (Fission yeast), this protein is DNA-binding protein scr1 (scr1).